A 374-amino-acid polypeptide reads, in one-letter code: Chaperone protein DnaJ (374 aa).

The J domain occupies 5 to 69 (NYYQILGVSK…QKRAAYDRLG (65 aa)). A CR-type zinc finger spans residues 137 to 215 (GIEKNISFSS…CHGMGRYHKQ (79 aa)). 8 residues coordinate Zn(2+): Cys150, Cys153, Cys167, Cys170, Cys189, Cys192, Cys203, and Cys206. CXXCXGXG motif repeat units follow at residues 150 to 157 (CDTCHGSG), 167 to 174 (CDACSGVG), 189 to 196 (CHKCQGNG), and 203 to 210 (CKKCHGMG).

Belongs to the DnaJ family. In terms of assembly, homodimer. It depends on Zn(2+) as a cofactor.

It localises to the cytoplasm. Participates actively in the response to hyperosmotic and heat shock by preventing the aggregation of stress-denatured proteins and by disaggregating proteins, also in an autonomous, DnaK-independent fashion. Unfolded proteins bind initially to DnaJ; upon interaction with the DnaJ-bound protein, DnaK hydrolyzes its bound ATP, resulting in the formation of a stable complex. GrpE releases ADP from DnaK; ATP binding to DnaK triggers the release of the substrate protein, thus completing the reaction cycle. Several rounds of ATP-dependent interactions between DnaJ, DnaK and GrpE are required for fully efficient folding. Also involved, together with DnaK and GrpE, in the DNA replication of plasmids through activation of initiation proteins. The polypeptide is Chaperone protein DnaJ (Rickettsia massiliae (strain Mtu5)).